The primary structure comprises 1183 residues: Atrophin-1 (1183 aa).

Disordered regions lie at residues 1–603 (MKTR…ITTS), 617–760 (SPAG…ARFN), and 780–855 (LEGS…HRPP). The short motif at 16-32 (RKKEAPGPREELRSRGR) is the Nuclear localization signal element. Basic and acidic residues predominate over residues 17-29 (KKEAPGPREELRS). At S34 the chain carries Phosphoserine. The span at 45-63 (GKAEKSRQTAKKARVEETS) shows a compositional bias: basic and acidic residues. Residues S77, S79, S100, S102, and S106 each carry the phosphoserine modification. Residues 107–127 (LDGRSINDDGSSDPRDIDQDN) show a composition bias toward basic and acidic residues. Residues 128-151 (RSTSPSIYSPGSVENDSDSSSGLS) are compositionally biased toward polar residues. 2 stretches are compositionally biased toward pro residues: residues 157–173 (PYHP…PPDS) and 207–218 (GPPPGAPPPHPQ). The segment covering 261-272 (IPISSSGASGAP) has biased composition (low complexity). Positions 344 to 373 (PPGPEKGPTLAPSPHPLPPASSSAPGPPMR) are enriched in pro residues. The segment covering 377–400 (SSCSSSSVAASSSSSAATSQYPAS) has biased composition (low complexity). The segment covering 415-436 (SMSVSNQPPKYTQPSLPSQAVW) has biased composition (polar residues). The involved in binding BAIAP2 stretch occupies residues 510–560 (HPLESSNSHHAHPYNMSPSLGSLRPYPPGPAHLPPSHGQVSYSQAGPNGPP). Residues 562-584 (SSSSNSSGSSSQAAYSCSHPSSS) are compositionally biased toward low complexity. S625 bears the Phosphoserine mark. At K634 the chain carries N6-acetyllysine. Phosphothreonine is present on T646. S654 is subject to Phosphoserine. T662 is modified (phosphothreonine). Composition is skewed to pro residues over residues 701–711 (LPPPPAAPTTG) and 732–745 (SPVP…PPPK). Residue S732 is modified to Phosphoserine; by MAPK8. Phosphoserine occurs at positions 739 and 741. Basic and acidic residues predominate over residues 788–832 (KRADLVEKVRREAEQRAREEKEREREREREKEREREKERELERSV). Residues 872-887 (DTPALRTLSEYARPHV) are required for interaction with FAT1. S889 carries the phosphoserine modification. Residues 921–940 (PAAREREREARERDLRDRLK) form a disordered region. The segment covering 922-940 (AAREREREARERDLRDRLK) has biased composition (basic and acidic residues). Residues 1026-1034 (ALGNDPLAR) carry the Nuclear export signal motif. R1108 bears the Asymmetric dimethylarginine mark. A Glycyl lysine isopeptide (Lys-Gly) (interchain with G-Cter in SUMO2) cross-link involves residue K1176.

In terms of assembly, interacts with NR2E1; the interaction represses the transcriptional activity of NR2E1. Interact (via its N-terminus) with FAT1 (via a C-terminal domain). Interacts with BAIAP2, WWP1, WWP2, WWP3 and RERE. Interacts (via its N-terminus) with MTG8; the interaction enhances transcriptional repression of MTG8. Interacts with PQBP1. Post-translationally, phosphorylated in vitro by MAPK8/JNK1 on Ser-732. As to expression, predominant neuronal expression, Expressed in most brain regions including striatum, hippocampus, cerebral cortex, diencephalon, brain stem and cerebellum. Highest levels in cerebellum. Also highly expressed in kidney and testis, low expression in skeletal muscle and heart.

It localises to the nucleus. The protein resides in the cytoplasm. The protein localises to the perinuclear region. It is found in the cell junction. Transcriptional corepressor. Recruits NR2E1 to repress transcription. Promotes vascular smooth cell (VSMC) migration and orientation. Corepressor of MTG8 transcriptional repression. Has some intrinsic repression activity. This Rattus norvegicus (Rat) protein is Atrophin-1 (Atn1).